We begin with the raw amino-acid sequence, 48 residues long: Cuticle protein 5.1 (48 aa).

Its function is as follows. Component of the cuticle of migratory locust which contains more than 100 different structural proteins. This chain is Cuticle protein 5.1, found in Locusta migratoria (Migratory locust).